Reading from the N-terminus, the 275-residue chain is MSPLRVRLYDYRKADVERATFIIEETSAEFVNTIRRALYTLVPTLRIEEVIIYENDTPMYDEMLAHRLGLIPLRVDDIDQFELPDLCDCGGKGCEKCQVRAELEVEGPTKVYARDLKFDHPDVEPAFPDTLITEVGEDQRIRLEVIAVPGLGLEHAKWKPVSAVGYKGLPELEIDEDKLKEKKITYECPQGIIRIENGEVVHIDEDRLPECRMYKEYERETDGAVRVRLRDDAFVFNVETDGSMSLDTAILKALDAIEHKLESLKKNLQKEVSGE.

The protein belongs to the archaeal Rpo3/eukaryotic RPB3 RNA polymerase subunit family. In terms of assembly, part of the RNA polymerase complex.

The protein resides in the cytoplasm. It catalyses the reaction RNA(n) + a ribonucleoside 5'-triphosphate = RNA(n+1) + diphosphate. Functionally, DNA-dependent RNA polymerase (RNAP) catalyzes the transcription of DNA into RNA using the four ribonucleoside triphosphates as substrates. The sequence is that of DNA-directed RNA polymerase subunit Rpo3 from Methanopyrus kandleri (strain AV19 / DSM 6324 / JCM 9639 / NBRC 100938).